We begin with the raw amino-acid sequence, 119 residues long: Ribonuclease P protein component (119 aa).

Belongs to the RnpA family. Consists of a catalytic RNA component (M1 or rnpB) and a protein subunit.

It carries out the reaction Endonucleolytic cleavage of RNA, removing 5'-extranucleotides from tRNA precursor.. RNaseP catalyzes the removal of the 5'-leader sequence from pre-tRNA to produce the mature 5'-terminus. It can also cleave other RNA substrates such as 4.5S RNA. The protein component plays an auxiliary but essential role in vivo by binding to the 5'-leader sequence and broadening the substrate specificity of the ribozyme. The protein is Ribonuclease P protein component of Listeria welshimeri serovar 6b (strain ATCC 35897 / DSM 20650 / CCUG 15529 / CIP 8149 / NCTC 11857 / SLCC 5334 / V8).